Consider the following 838-residue polypeptide: Protein P (838 aa).

Positions methionine 1–glutamine 177 are terminal protein domain (TP). Residues glutamate 178–leucine 341 form a spacer region. Disordered regions lie at residues glutamine 215 to isoleucine 238 and serine 285 to serine 311. Polar residues predominate over residues serine 285 to glycine 294. A polymerase/reverse transcriptase domain (RT) region spans residues glutamate 342 to glutamine 685. The region spanning glutamate 352 to isoleucine 595 is the Reverse transcriptase domain. Mg(2+) contacts are provided by aspartate 424, aspartate 546, and aspartate 547.

This sequence belongs to the hepadnaviridae P protein family.

The enzyme catalyses DNA(n) + a 2'-deoxyribonucleoside 5'-triphosphate = DNA(n+1) + diphosphate. It catalyses the reaction Endonucleolytic cleavage to 5'-phosphomonoester.. Its activity is regulated as follows. Activated by host HSP70 and HSP40 in vitro to be able to bind the epsilon loop of the pgRNA. Because deletion of the RNase H region renders the protein partly chaperone-independent, the chaperones may be needed indirectly to relieve occlusion of the RNA-binding site by this domain. Inhibited by several reverse-transcriptase inhibitors: Lamivudine, Adefovir and Entecavir. Its function is as follows. Multifunctional enzyme that converts the viral RNA genome into dsDNA in viral cytoplasmic capsids. This enzyme displays a DNA polymerase activity that can copy either DNA or RNA templates, and a ribonuclease H (RNase H) activity that cleaves the RNA strand of RNA-DNA heteroduplexes in a partially processive 3'- to 5'-endonucleasic mode. Neo-synthesized pregenomic RNA (pgRNA) are encapsidated together with the P protein, and reverse-transcribed inside the nucleocapsid. Initiation of reverse-transcription occurs first by binding the epsilon loop on the pgRNA genome, and is initiated by protein priming, thereby the 5'-end of (-)DNA is covalently linked to P protein. Partial (+)DNA is synthesized from the (-)DNA template and generates the relaxed circular DNA (RC-DNA) genome. After budding and infection, the RC-DNA migrates in the nucleus, and is converted into a plasmid-like covalently closed circular DNA (cccDNA). The activity of P protein does not seem to be necessary for cccDNA generation, and is presumably released from (+)DNA by host nuclear DNA repair machinery. The chain is Protein P from Homo sapiens (Human).